Consider the following 370-residue polypeptide: Coiled-coil domain-containing protein 89 (370 aa).

A disordered region spans residues 1 to 38; that stretch reads MPQEESAPRMDTPSSEEPLDKQNRKLEDQEEEMGFKEL. T12 is modified (phosphothreonine). The segment covering 18 to 38 has biased composition (basic and acidic residues); the sequence is PLDKQNRKLEDQEEEMGFKEL. The stretch at 19–346 forms a coiled coil; it reads LDKQNRKLED…YDELRLQSEA (328 aa).

The protein belongs to the CCDC89 family. As to quaternary structure, interacts with HEY1.

The protein localises to the cytoplasm. It localises to the nucleus. The polypeptide is Coiled-coil domain-containing protein 89 (Bos taurus (Bovine)).